Here is a 332-residue protein sequence, read N- to C-terminus: Large ribosomal subunit protein mL44 (332 aa).

The N-terminal 30 residues, 1-30, are a transit peptide targeting the mitochondrion; sequence MASGLVRLLQQGPRCLLAPVAPKLVPPVRG. One can recognise an RNase III domain in the interval 86 to 228; it reads DLLKTAFVNS…LITQMTGKEL (143 aa). In terms of domain architecture, DRBM spans 236-306; it reads NPMGLLVEEL…ARVALRKLYG (71 aa).

It belongs to the ribonuclease III family. Mitochondrion-specific ribosomal protein mL44 subfamily. Component of the mitochondrial ribosome large subunit (39S) which comprises a 16S rRNA and about 50 distinct proteins.

It is found in the mitochondrion. Component of the 39S subunit of mitochondrial ribosome. May have a function in the assembly/stability of nascent mitochondrial polypeptides exiting the ribosome. This Pongo abelii (Sumatran orangutan) protein is Large ribosomal subunit protein mL44 (MRPL44).